Here is a 358-residue protein sequence, read N- to C-terminus: N-acylethanolamine-hydrolyzing acid amidase (358 aa).

The signal sequence occupies residues 1 to 26; it reads MQGTGHPVRPVLELLLLLLLLAGVGG. Residues Asn39 and Asn108 are each glycosylated (N-linked (GlcNAc...) asparagine). Catalysis depends on Cys127, which acts as the Nucleophile. Residues Asn310, Asn334, and Asn356 are each glycosylated (N-linked (GlcNAc...) asparagine).

The protein belongs to the acid ceramidase family. As to quaternary structure, heterodimer of an alpha and a beta subunit, produced by autocatalytic cleavage. N-glycosylated. Tunicamycin treatment causes a reduction in specific activity against N-palmitoylethanolamine. Post-translationally, autoproteolytic cleavage at pH 4.5 gives rise to the alpha and beta subunit. Cleavage gives rise to a conformation change that activates the enzyme. The same catalytic Cys residue mediates the autoproteolytic cleavage and subsequent hydrolysis of lipid substrates.

It localises to the lysosome. The protein localises to the membrane. The catalysed reaction is N-hexadecanoylethanolamine + H2O = ethanolamine + hexadecanoate. The enzyme catalyses an N-(long-chain fatty acyl)ethanolamine + H2O = a long-chain fatty acid + ethanolamine. It carries out the reaction N-dodecanoylethanolamine + H2O = dodecanoate + ethanolamine. It catalyses the reaction N-tetradecanoylethanolamine + H2O = tetradecanoate + ethanolamine. The catalysed reaction is an N-acylsphing-4-enine + H2O = sphing-4-enine + a fatty acid. The enzyme catalyses N-hexadecanoylsphing-4-enine + H2O = sphing-4-enine + hexadecanoate. It carries out the reaction N-dodecanoylsphing-4-enine + H2O = dodecanoate + sphing-4-enine. It participates in lipid metabolism; fatty acid metabolism. Its function is as follows. Degrades bioactive fatty acid amides to their corresponding acids, with the following preference: N-palmitoylethanolamine &gt; N-myristoylethanolamine &gt; N-stearoylethanolamine &gt; N-oleoylethanolamine &gt; N-linoleoylethanolamine &gt; N-arachidonoylethanolamine. The protein is N-acylethanolamine-hydrolyzing acid amidase of Oryctolagus cuniculus (Rabbit).